Reading from the N-terminus, the 394-residue chain is MKIHEYQAKDILAGFGIAIPRGRVAMNASQVERAARELGGHCVIKAQVYAGGRGKGGGIRVAQDPGQAGEIAKELLGTKLVTPQTGPEGLEVRRLLVEEVVDIERELYLSITLDRESSRYCLIASAEGGMDIEEIARTAPDRIRILTIDPFIGLRSYQARRTALGLGLVGPLCEECVELILNLYRCLLERDCSLVEINPLVVTNAGWLVAMDTKMTFDDNALQRHCEYPDLVDYSQLNPLEIAAARFDLSYIKLSGAIGCMVNGAGLAMATLDVLKEAGGEPANFLDVGGGASREKVAEAFRIILQDRDVRGVFVNIFGGIMRCDIIAQGIIDAASGGGCRLPIVVRMDGNRVEEGKQLLRESGLNIRIGENMGDGAQQIVAMLNREVNQPCQS.

Residues K9 to A243 form the ATP-grasp domain. Residues K45, G52–G54, E98, V101, and E106 contribute to the ATP site. Positions 198 and 212 each coordinate Mg(2+). Substrate contacts are provided by residues N263 and G320–M322.

Belongs to the succinate/malate CoA ligase beta subunit family. Heterotetramer of two alpha and two beta subunits. Mg(2+) is required as a cofactor.

It carries out the reaction succinate + ATP + CoA = succinyl-CoA + ADP + phosphate. The enzyme catalyses GTP + succinate + CoA = succinyl-CoA + GDP + phosphate. Its pathway is carbohydrate metabolism; tricarboxylic acid cycle; succinate from succinyl-CoA (ligase route): step 1/1. Succinyl-CoA synthetase functions in the citric acid cycle (TCA), coupling the hydrolysis of succinyl-CoA to the synthesis of either ATP or GTP and thus represents the only step of substrate-level phosphorylation in the TCA. The beta subunit provides nucleotide specificity of the enzyme and binds the substrate succinate, while the binding sites for coenzyme A and phosphate are found in the alpha subunit. This is Succinate--CoA ligase [ADP-forming] subunit beta from Pelobacter propionicus (strain DSM 2379 / NBRC 103807 / OttBd1).